Consider the following 223-residue polypeptide: Probable transaldolase (223 aa).

The active-site Schiff-base intermediate with substrate is the Lys-92.

The protein belongs to the transaldolase family. Type 3B subfamily.

Its subcellular location is the cytoplasm. The catalysed reaction is D-sedoheptulose 7-phosphate + D-glyceraldehyde 3-phosphate = D-erythrose 4-phosphate + beta-D-fructose 6-phosphate. It functions in the pathway carbohydrate degradation; pentose phosphate pathway; D-glyceraldehyde 3-phosphate and beta-D-fructose 6-phosphate from D-ribose 5-phosphate and D-xylulose 5-phosphate (non-oxidative stage): step 2/3. Its function is as follows. Transaldolase is important for the balance of metabolites in the pentose-phosphate pathway. This is Probable transaldolase from Thermus thermophilus (strain ATCC BAA-163 / DSM 7039 / HB27).